Here is a 635-residue protein sequence, read N- to C-terminus: Arabinoxylan arabinofuranohydrolase (635 aa).

A signal peptide spans 1–26 (MIRKCLVLFLSFALLLSVFPMLNVDA). Catalysis depends on Asp49, which acts as the Proton acceptor. Residue Glu248 is the Proton donor of the active site. Residue Asn311 coordinates substrate. CBM6 domains lie at 379–508 (TRVE…WQFT) and 517–634 (TKVE…IEFS). Ca(2+) contacts are provided by Glu382, Glu384, Asn406, Leu407, Asp503, Glu520, Glu522, Asp539, Tyr544, Asp620, Trp624, Asp625, and Asp629.

It belongs to the glycosyl hydrolase 43 family.

The protein localises to the secreted. The catalysed reaction is Hydrolysis of terminal non-reducing alpha-L-arabinofuranoside residues in alpha-L-arabinosides.. It participates in glycan degradation; xylan degradation. Activated by calcium and magnesium. Inhibited by copper. Functionally, cleaves arabinose units from O-2- or O-3-monosubstituted xylose residues, thereby assisting in arabinoxylan (AX) and short-chain arabinoxylo-oligosaccharide (AXOS) degradation. Preferres wheat flour xylan over oat spelt xylan as substrate. Does not display endoxylanase activity. The polypeptide is Arabinoxylan arabinofuranohydrolase (xynD) (Paenibacillus polymyxa (Bacillus polymyxa)).